The primary structure comprises 498 residues: WD repeat-containing protein 55 homolog (498 aa).

The tract at residues 1-131 (MHTHNNFKTP…ATFDLDEDDE (131 aa)) is disordered. Acidic residues-rich tracts occupy residues 12 to 23 (DEDELDDLDEDM) and 31 to 48 (IEQE…EYDL). 6 WD repeats span residues 154–193 (KLED…NKLL), 198–237 (VHSK…LKKL), 241–279 (AHDD…AIFE), 282–321 (ELED…MYVQ), 324–363 (PYEE…YHCD), and 408–447 (QHNM…DFGE).

This sequence belongs to the WD repeat WDR55 family.

The polypeptide is WD repeat-containing protein 55 homolog (Drosophila simulans (Fruit fly)).